A 448-amino-acid polypeptide reads, in one-letter code: Protein giant (448 aa).

4 disordered regions span residues 23 to 47, 83 to 134, 238 to 259, and 298 to 363; these read MHHH…LPVQ, QQHQ…ASPT, VEAT…RPFK, and IRSS…TSSS. Positions 30-47 are enriched in low complexity; that stretch reads HHQQQPLHHLPHSQLPVQ. Basic and acidic residues predominate over residues 100 to 112; sequence DLSRRCDSVETPR. The segment covering 115–134 has biased composition (low complexity); it reads PSPYQTSYSYGSGSPSASPT. The segment covering 298–310 has biased composition (polar residues); that stretch reads IRSSNGGSRTVTN. The segment covering 318–333 has biased composition (low complexity); the sequence is SRSGSVNEGSSSNNNS. In terms of domain architecture, bZIP spans 384 to 447; that stretch reads DAAYYERRRK…AAFTSAKVTT (64 aa). The interval 390–406 is basic motif; it reads RRRKNNAAAKKSRDRRR. The segment at 407-414 is leucine-zipper; it reads IKEDEIAI.

This sequence belongs to the bZIP family. Homodimer or heterodimer. Post-translationally, phosphorylated at multiple sites.

It localises to the nucleus. Its function is as follows. Represses the expression of both the krueppel and knirps segmentation gap genes. Binds, in vitro, to the krueppel regulatory elements CD1 and CD2. It is required in the early embryo for the development of portions of the head and abdomen. In Drosophila melanogaster (Fruit fly), this protein is Protein giant (gt).